Here is a 233-residue protein sequence, read N- to C-terminus: Orotate phosphoribosyltransferase (233 aa).

K29 contacts 5-phospho-alpha-D-ribose 1-diphosphate. 37–38 (FF) lines the orotate pocket. Residues 79-80 (YK), R109, K110, K113, H115, and 135-143 (DDVITAGTA) each bind 5-phospho-alpha-D-ribose 1-diphosphate. Orotate is bound by residues T139 and R167.

The protein belongs to the purine/pyrimidine phosphoribosyltransferase family. PyrE subfamily. As to quaternary structure, homodimer.

It carries out the reaction orotidine 5'-phosphate + diphosphate = orotate + 5-phospho-alpha-D-ribose 1-diphosphate. It participates in pyrimidine metabolism; UMP biosynthesis via de novo pathway; UMP from orotate: step 1/2. Catalyzes the transfer of a ribosyl phosphate group from 5-phosphoribose 1-diphosphate to orotate, leading to the formation of orotidine monophosphate (OMP). In Neurospora crassa (strain ATCC 24698 / 74-OR23-1A / CBS 708.71 / DSM 1257 / FGSC 987), this protein is Orotate phosphoribosyltransferase (ura-5).